Reading from the N-terminus, the 335-residue chain is UDP-N-acetylenolpyruvoylglucosamine reductase 1 (335 aa).

Residues 36–202 (RIGGPAAVFA…LEVELLLKPG (167 aa)) form the FAD-binding PCMH-type domain. R181 is a catalytic residue. Residue S231 is the Proton donor of the active site. Residue E306 is part of the active site.

The protein belongs to the MurB family. Requires FAD as cofactor.

The protein resides in the cytoplasm. It carries out the reaction UDP-N-acetyl-alpha-D-muramate + NADP(+) = UDP-N-acetyl-3-O-(1-carboxyvinyl)-alpha-D-glucosamine + NADPH + H(+). It participates in cell wall biogenesis; peptidoglycan biosynthesis. Functionally, cell wall formation. This is UDP-N-acetylenolpyruvoylglucosamine reductase 1 (murB1) from Corynebacterium glutamicum (strain ATCC 13032 / DSM 20300 / JCM 1318 / BCRC 11384 / CCUG 27702 / LMG 3730 / NBRC 12168 / NCIMB 10025 / NRRL B-2784 / 534).